The chain runs to 207 residues: Large ribosomal subunit protein uL4 (207 aa).

Residues alanine 49 to alanine 73 form a disordered region.

The protein belongs to the universal ribosomal protein uL4 family. As to quaternary structure, part of the 50S ribosomal subunit.

Its function is as follows. One of the primary rRNA binding proteins, this protein initially binds near the 5'-end of the 23S rRNA. It is important during the early stages of 50S assembly. It makes multiple contacts with different domains of the 23S rRNA in the assembled 50S subunit and ribosome. In terms of biological role, forms part of the polypeptide exit tunnel. This Helicobacter hepaticus (strain ATCC 51449 / 3B1) protein is Large ribosomal subunit protein uL4.